Reading from the N-terminus, the 71-residue chain is Translation initiation factor IF-1 (71 aa).

Positions 1-71 (MSKDDLIQFT…LTKGRVIHRH (71 aa)) constitute an S1-like domain.

This sequence belongs to the IF-1 family. In terms of assembly, component of the 30S ribosomal translation pre-initiation complex which assembles on the 30S ribosome in the order IF-2 and IF-3, IF-1 and N-formylmethionyl-tRNA(fMet); mRNA recruitment can occur at any time during PIC assembly.

It is found in the cytoplasm. One of the essential components for the initiation of protein synthesis. Stabilizes the binding of IF-2 and IF-3 on the 30S subunit to which N-formylmethionyl-tRNA(fMet) subsequently binds. Helps modulate mRNA selection, yielding the 30S pre-initiation complex (PIC). Upon addition of the 50S ribosomal subunit IF-1, IF-2 and IF-3 are released leaving the mature 70S translation initiation complex. The protein is Translation initiation factor IF-1 of Rickettsia typhi (strain ATCC VR-144 / Wilmington).